Reading from the N-terminus, the 481-residue chain is Acetyltransferase peniE (481 aa).

Catalysis depends on proton acceptor residues His-164 and Asp-411.

This sequence belongs to the plant acyltransferase family. As to quaternary structure, monomer.

Functionally, acetyltransferase; part of the gene cluster that mediates the biosynthesis of penifulvin A, a potent insecticidal sesquiterpene that features a [5.5.5.6]dioxafenestrane ring. The first step of the pathway is performed by the sesquiterpene cyclase peniA that generates the angular triquinane scaffold silphinene via cyclization of the linear farnesyl pyrophosphate (FPP). The cytochrome P450 monooxygenase peniB and the flavin-dependent monooxygenase peniC then catalyze a series of oxidation reactions to transform silphinene into penifulvin A. The dioxygenases peniD and peniF, as well as the acetyltransferase peniE, do not seem to be involved in the biosynthesis of penifulvin A. This is Acetyltransferase peniE from Penicillium patulum (Penicillium griseofulvum).